The following is a 294-amino-acid chain: Glyceraldehyde-3-phosphate dehydrogenase (294 aa).

Residues D19, K63, and T105 each coordinate NAD(+). D-glyceraldehyde 3-phosphate-binding positions include 134–136 (SCT), T165, 194–195 (TG), and R217. C135 acts as the Nucleophile in catalysis.

Belongs to the glyceraldehyde-3-phosphate dehydrogenase family. Homotetramer.

Its subcellular location is the cytoplasm. The catalysed reaction is D-glyceraldehyde 3-phosphate + phosphate + NAD(+) = (2R)-3-phospho-glyceroyl phosphate + NADH + H(+). It participates in carbohydrate degradation; glycolysis; pyruvate from D-glyceraldehyde 3-phosphate: step 1/5. Catalyzes the oxidative phosphorylation of glyceraldehyde 3-phosphate (G3P) to 1,3-bisphosphoglycerate (BPG) using the cofactor NAD. The first reaction step involves the formation of a hemiacetal intermediate between G3P and a cysteine residue, and this hemiacetal intermediate is then oxidized to a thioester, with concomitant reduction of NAD to NADH. The reduced NADH is then exchanged with the second NAD, and the thioester is attacked by a nucleophilic inorganic phosphate to produce BPG. This chain is Glyceraldehyde-3-phosphate dehydrogenase (gap), found in Atlantibacter hermannii (Escherichia hermannii).